The following is a 436-amino-acid chain: Glutamyl-tRNA(Gln) amidotransferase subunit D (436 aa).

Residues glutamine 91–asparagine 420 enclose the Asparaginase/glutaminase domain. Residues threonine 101, threonine 177, aspartate 178, and lysine 254 contribute to the active site.

The protein belongs to the asparaginase 1 family. GatD subfamily. As to quaternary structure, heterodimer of GatD and GatE.

It carries out the reaction L-glutamyl-tRNA(Gln) + L-glutamine + ATP + H2O = L-glutaminyl-tRNA(Gln) + L-glutamate + ADP + phosphate + H(+). Functionally, allows the formation of correctly charged Gln-tRNA(Gln) through the transamidation of misacylated Glu-tRNA(Gln) in organisms which lack glutaminyl-tRNA synthetase. The reaction takes place in the presence of glutamine and ATP through an activated gamma-phospho-Glu-tRNA(Gln). The GatDE system is specific for glutamate and does not act on aspartate. This chain is Glutamyl-tRNA(Gln) amidotransferase subunit D, found in Methanobrevibacter smithii (strain ATCC 35061 / DSM 861 / OCM 144 / PS).